The chain runs to 160 residues: Putative control protein C.MjaVP (160 aa).

Functionally, may be involved in control of expression of the type II restriction enzyme MjaV and/or its methyltransferase M.MjaV. In Methanocaldococcus jannaschii (strain ATCC 43067 / DSM 2661 / JAL-1 / JCM 10045 / NBRC 100440) (Methanococcus jannaschii), this protein is Putative control protein C.MjaVP.